A 363-amino-acid chain; its full sequence is NADH-quinone oxidoreductase subunit H (363 aa).

A run of 10 helical transmembrane segments spans residues 29–49 (VLKI…YVVW), 62–82 (GPMY…KLLF), 96–116 (FIIA…VVPF), 127–147 (VGLL…ILAG), 163–183 (AAQV…VMIA), 202–222 (FFDW…VSGV), 239–257 (IVAG…LFFL), 264–286 (ILVS…QGWV), 299–319 (TGGW…YIWF), and 339–359 (FIPL…YGVI).

The protein belongs to the complex I subunit 1 family. As to quaternary structure, NDH-1 is composed of 14 different subunits. Subunits NuoA, H, J, K, L, M, N constitute the membrane sector of the complex.

It localises to the cell inner membrane. It catalyses the reaction a quinone + NADH + 5 H(+)(in) = a quinol + NAD(+) + 4 H(+)(out). Functionally, NDH-1 shuttles electrons from NADH, via FMN and iron-sulfur (Fe-S) centers, to quinones in the respiratory chain. The immediate electron acceptor for the enzyme in this species is believed to be ubiquinone. Couples the redox reaction to proton translocation (for every two electrons transferred, four hydrogen ions are translocated across the cytoplasmic membrane), and thus conserves the redox energy in a proton gradient. This subunit may bind ubiquinone. The polypeptide is NADH-quinone oxidoreductase subunit H (Xanthomonas campestris pv. campestris (strain B100)).